We begin with the raw amino-acid sequence, 936 residues long: Protein translocase subunit SecA (936 aa).

ATP contacts are provided by residues Gln90, 108–112 (GEGKT), and Asp499.

This sequence belongs to the SecA family. In terms of assembly, monomer and homodimer. Part of the essential Sec protein translocation apparatus which comprises SecA, SecYEG and auxiliary proteins SecDF. Other proteins may also be involved.

It localises to the cell inner membrane. The protein localises to the cellular thylakoid membrane. The protein resides in the cytoplasm. It catalyses the reaction ATP + H2O + cellular proteinSide 1 = ADP + phosphate + cellular proteinSide 2.. Functionally, part of the Sec protein translocase complex. Interacts with the SecYEG preprotein conducting channel. Has a central role in coupling the hydrolysis of ATP to the transfer of proteins into and across the cell membrane, serving as an ATP-driven molecular motor driving the stepwise translocation of polypeptide chains across the membrane. Probably participates in protein translocation into and across both the cytoplasmic and thylakoid membranes in cyanobacterial cells. In Trichodesmium erythraeum (strain IMS101), this protein is Protein translocase subunit SecA.